The chain runs to 301 residues: Putative S-adenosyl-L-methionine-dependent methyltransferase MAP_3777 (301 aa).

S-adenosyl-L-methionine is bound by residues D126 and 155–156 (DL).

Belongs to the UPF0677 family.

In terms of biological role, exhibits S-adenosyl-L-methionine-dependent methyltransferase activity. In Mycolicibacterium paratuberculosis (strain ATCC BAA-968 / K-10) (Mycobacterium paratuberculosis), this protein is Putative S-adenosyl-L-methionine-dependent methyltransferase MAP_3777.